The chain runs to 373 residues: Histidinol-phosphate aminotransferase 2 (373 aa).

The residue at position 229 (lysine 229) is an N6-(pyridoxal phosphate)lysine.

Belongs to the class-II pyridoxal-phosphate-dependent aminotransferase family. Histidinol-phosphate aminotransferase subfamily. Homodimer. Pyridoxal 5'-phosphate serves as cofactor.

The enzyme catalyses L-histidinol phosphate + 2-oxoglutarate = 3-(imidazol-4-yl)-2-oxopropyl phosphate + L-glutamate. It participates in amino-acid biosynthesis; L-histidine biosynthesis; L-histidine from 5-phospho-alpha-D-ribose 1-diphosphate: step 7/9. This chain is Histidinol-phosphate aminotransferase 2, found in Hydrogenovibrio crunogenus (strain DSM 25203 / XCL-2) (Thiomicrospira crunogena).